Reading from the N-terminus, the 145-residue chain is uncharacterized protein (145 aa).

The protein belongs to the methyltransferase superfamily.

Probable methyltransferase. This is an uncharacterized protein from Schizosaccharomyces pombe (strain 972 / ATCC 24843) (Fission yeast).